The chain runs to 187 residues: Threonylcarbamoyl-AMP synthase (187 aa).

Residues 4-187 form the YrdC-like domain; that stretch reads NHTDDPFLLD…GHSGQTIRDN (184 aa). The tract at residues 168–187 is disordered; that stretch reads GSRSPSKIRHGHSGQTIRDN.

It belongs to the SUA5 family. TsaC subfamily.

The protein localises to the cytoplasm. It carries out the reaction L-threonine + hydrogencarbonate + ATP = L-threonylcarbamoyladenylate + diphosphate + H2O. Its function is as follows. Required for the formation of a threonylcarbamoyl group on adenosine at position 37 (t(6)A37) in tRNAs that read codons beginning with adenine. Catalyzes the conversion of L-threonine, HCO(3)(-)/CO(2) and ATP to give threonylcarbamoyl-AMP (TC-AMP) as the acyladenylate intermediate, with the release of diphosphate. The sequence is that of Threonylcarbamoyl-AMP synthase from Pseudoalteromonas atlantica (strain T6c / ATCC BAA-1087).